A 383-amino-acid polypeptide reads, in one-letter code: 1-deoxy-D-xylulose 5-phosphate reductoisomerase (383 aa).

NADPH-binding residues include threonine 10, glycine 11, serine 12, isoleucine 13, glycine 36, arginine 37, asparagine 38, and asparagine 122. Lysine 123 lines the 1-deoxy-D-xylulose 5-phosphate pocket. Glutamate 124 is a binding site for NADPH. A Mn(2+)-binding site is contributed by aspartate 148. 1-deoxy-D-xylulose 5-phosphate contacts are provided by serine 149, glutamate 150, serine 174, and histidine 197. Residue glutamate 150 participates in Mn(2+) binding. Glycine 203 contributes to the NADPH binding site. Residues serine 210, asparagine 215, lysine 216, and glutamate 219 each contribute to the 1-deoxy-D-xylulose 5-phosphate site. Glutamate 219 contacts Mn(2+).

The protein belongs to the DXR family. Requires Mg(2+) as cofactor. The cofactor is Mn(2+).

The enzyme catalyses 2-C-methyl-D-erythritol 4-phosphate + NADP(+) = 1-deoxy-D-xylulose 5-phosphate + NADPH + H(+). It functions in the pathway isoprenoid biosynthesis; isopentenyl diphosphate biosynthesis via DXP pathway; isopentenyl diphosphate from 1-deoxy-D-xylulose 5-phosphate: step 1/6. Catalyzes the NADPH-dependent rearrangement and reduction of 1-deoxy-D-xylulose-5-phosphate (DXP) to 2-C-methyl-D-erythritol 4-phosphate (MEP). The polypeptide is 1-deoxy-D-xylulose 5-phosphate reductoisomerase (Bacillus subtilis (strain 168)).